An 83-amino-acid chain; its full sequence is Beta/kappa-theraphotoxin-Cg2a (83 aa).

An N-terminal signal peptide occupies residues 1–21 (MKASVFAVILGLVVLCACSFA). Positions 22–53 (EDEQDQFVSPNELLKSMFVESRHEFTPEVEGR) are excised as a propeptide. 3 disulfides stabilise this stretch: Cys55–Cys69, Cys62–Cys74, and Cys68–Cys78. Ile82 is subject to Isoleucine amide.

This sequence belongs to the neurotoxin 30 (phrixotoxin) family. As to expression, expressed by the venom gland.

It is found in the secreted. This gating-modifier toxin shows an important inhibitory activity on sodium channels. It is very active on Nav1.7/SCN9A (IC(50)~0.6 nM), and also shows activity on Nav1.3/SCN3A (IC(50)=292 nM), Nav1.4/SCN4A (IC(50)=2.2-159 nM), and Nav1.5/SCN5A (IC(50)=2.3-2.9 uM). It has also been shown to inhibit tetrodotoxin (TTX)-resistant (IC(50)=27.6 nM) and TTX-sensitive (IC(50)=30.2 nM) sodium channels in rat dorsal root ganglion neurons. Lower inhibitory activity has also been shown on potassium channels: Kv4.2/KCND2 (IC(50)=604.2 nM), Kv4.3/KCND3 (IC(50)=425.1 nM), and Kv2.1/KCNB1 (IC(50)=14.3 uM). It binds to phospholipid membranes. Like its analog AM-8145, it may act by interacting only with the second voltage-sensor domain of Nav1.7/SCN9A. This is Beta/kappa-theraphotoxin-Cg2a from Chilobrachys guangxiensis (Chinese earth tiger tarantula).